The following is a 356-amino-acid chain: S-adenosylmethionine:tRNA ribosyltransferase-isomerase (356 aa).

The protein belongs to the QueA family. In terms of assembly, monomer.

The protein localises to the cytoplasm. It catalyses the reaction 7-aminomethyl-7-carbaguanosine(34) in tRNA + S-adenosyl-L-methionine = epoxyqueuosine(34) in tRNA + adenine + L-methionine + 2 H(+). It functions in the pathway tRNA modification; tRNA-queuosine biosynthesis. Transfers and isomerizes the ribose moiety from AdoMet to the 7-aminomethyl group of 7-deazaguanine (preQ1-tRNA) to give epoxyqueuosine (oQ-tRNA). The sequence is that of S-adenosylmethionine:tRNA ribosyltransferase-isomerase from Yersinia pestis.